The chain runs to 814 residues: Valine--tRNA ligase (814 aa).

The 'HIGH' region signature appears at 46 to 56; the sequence is PTVSGQLHIGH. A 'KMSKS' region motif is present at residues 536 to 540; that stretch reads KMSKS. Residue lysine 539 coordinates ATP.

This sequence belongs to the class-I aminoacyl-tRNA synthetase family. ValS type 2 subfamily. Monomer.

It is found in the cytoplasm. It carries out the reaction tRNA(Val) + L-valine + ATP = L-valyl-tRNA(Val) + AMP + diphosphate. In terms of biological role, catalyzes the attachment of valine to tRNA(Val). As ValRS can inadvertently accommodate and process structurally similar amino acids such as threonine, to avoid such errors, it has a 'posttransfer' editing activity that hydrolyzes mischarged Thr-tRNA(Val) in a tRNA-dependent manner. This chain is Valine--tRNA ligase, found in Rickettsia prowazekii (strain Madrid E).